The primary structure comprises 349 residues: N-acetyltaurine hydrolase (349 aa).

His-26, His-28, Glu-169, His-201, His-230, and Asp-298 together coordinate a divalent metal cation.

This sequence belongs to the metallo-dependent hydrolases superfamily. Phosphotriesterase family. A divalent metal cation serves as cofactor.

The protein resides in the cytoplasm. The protein localises to the cytosol. It catalyses the reaction N-acetyltaurine + H2O = taurine + acetate. The enzyme catalyses N-propanoyltaurine + H2O = propanoate + taurine. It carries out the reaction N-acetyl-L-methionine + H2O = L-methionine + acetate. The catalysed reaction is N-acetyl-L-isoleucine + H2O = L-isoleucine + acetate. It catalyses the reaction N-acetyl-L-leucine + H2O = L-leucine + acetate. The enzyme catalyses N-acetyl-L-valine + H2O = L-valine + acetate. Functionally, N-acetyltaurine hydrolase that catalyzes the hydrolysis of N-acetyltaurine into taurine and acetate. PTER also acts on other N-acetyl amino acids (Met, Ile, Leu, Val) and N-propionyltaurine, but at lower rates. This chain is N-acetyltaurine hydrolase (pter), found in Xenopus tropicalis (Western clawed frog).